The chain runs to 474 residues: CUGBP Elav-like family member 4 (474 aa).

A sufficient for RNA-binding and MSE-dependent splicing activity region spans residues 1 to 287; it reads MYIKMATLAN…AAFAAAQMQQ (287 aa). Residues 18 to 28 are compositionally biased toward polar residues; the sequence is LSTNGLGSSPG. The disordered stretch occupies residues 18–41; sequence LSTNGLGSSPGSAGHMNGLSHSPG. 2 consecutive RRM domains span residues 54-135 and 141-221; these read IKLF…PADS and RKLF…FADT. Residues 228 to 247 are necessary for TNNT2 exon 5 inclusion; the sequence is RRMQQMAGQMGMFNPMAIPF. One can recognise an RRM 3 domain in the interval 392–467; that stretch reads PQPPPMIPQQ…KRLKVQLKRP (76 aa).

It belongs to the CELF/BRUNOL family.

It localises to the nucleus. The protein resides in the cytoplasm. RNA-binding protein implicated in the regulation of pre-mRNA alternative splicing. Mediates exon inclusion and/or exclusion in pre-mRNA that are subject to tissue-specific and developmentally regulated alternative splicing. Specifically activates exon 5 inclusion of cardiac isoforms of TNNT2 during heart remodeling at the juvenile to adult transition. Promotes exclusion of both the smooth muscle (SM) and non-muscle (NM) exons in actinin pre-mRNAs. Activates the splicing of MAPT/Tau exon 10. Binds to muscle-specific splicing enhancer (MSE) intronic sites flanking the alternative exon 5 of TNNT2 pre-mRNA. The chain is CUGBP Elav-like family member 4 (CELF4) from Macaca fascicularis (Crab-eating macaque).